A 428-amino-acid polypeptide reads, in one-letter code: MNTTRSQAIFSAAQRLMPGGVSSPVRAFRSVGGQPIVFDRVKGAYAWDVDGNRFIDYIGSWGPAICGHAHPEVIVALQDALEKGTSFGAPCELENQLAEMVIDAVPSVEMVRFVNSGTEACMSVLRLMRAFTGRDKLIKFEGCYHGHADMFLVKAGSGVATLGLPDSPGVPRSTTSNTLTAPYNDLEAVKELFAENPDAISGVILEPVVGNAGFITPEPGFLEGLRELTREHGALLVFDEVMSGFRISYGGAQARFGVTPDLTTMGKVIGGGLPVGAYGGRAEIMEMVAPAGPMYQAGTLSGNPLAMTAGIKTLELLKQEGTYERLESTTERLIKGILEAAKAAEVPITGNSIGAMFGFFLCEGPVRNFEDAKATDTELFGKLHRAMLERGIYLAPSAFEAGFTSLAHSEADIETTLKAFRESFAAVA.

An N6-(pyridoxal phosphate)lysine modification is found at Lys267.

It belongs to the class-III pyridoxal-phosphate-dependent aminotransferase family. HemL subfamily. As to quaternary structure, homodimer. The cofactor is pyridoxal 5'-phosphate.

It localises to the cytoplasm. The enzyme catalyses (S)-4-amino-5-oxopentanoate = 5-aminolevulinate. It functions in the pathway porphyrin-containing compound metabolism; protoporphyrin-IX biosynthesis; 5-aminolevulinate from L-glutamyl-tRNA(Glu): step 2/2. The protein operates within porphyrin-containing compound metabolism; chlorophyll biosynthesis. In Prochlorococcus marinus (strain MIT 9313), this protein is Glutamate-1-semialdehyde 2,1-aminomutase.